We begin with the raw amino-acid sequence, 395 residues long: Imidazolonepropionase (395 aa).

Residues His63 and His65 each coordinate Fe(3+). Positions 63 and 65 each coordinate Zn(2+). 4-imidazolone-5-propanoate contacts are provided by Arg72, Tyr135, and His168. Tyr135 contacts N-formimidoyl-L-glutamate. His233 serves as a coordination point for Fe(3+). His233 is a binding site for Zn(2+). Gln236 contacts 4-imidazolone-5-propanoate. Residue Asp308 participates in Fe(3+) binding. A Zn(2+)-binding site is contributed by Asp308. The N-formimidoyl-L-glutamate site is built by Asn310 and Gly312. Thr313 is a 4-imidazolone-5-propanoate binding site.

Belongs to the metallo-dependent hydrolases superfamily. HutI family. The cofactor is Zn(2+). Requires Fe(3+) as cofactor.

It is found in the cytoplasm. The catalysed reaction is 4-imidazolone-5-propanoate + H2O = N-formimidoyl-L-glutamate. The protein operates within amino-acid degradation; L-histidine degradation into L-glutamate; N-formimidoyl-L-glutamate from L-histidine: step 3/3. Catalyzes the hydrolytic cleavage of the carbon-nitrogen bond in imidazolone-5-propanoate to yield N-formimidoyl-L-glutamate. It is the third step in the universal histidine degradation pathway. The sequence is that of Imidazolonepropionase from Cereibacter sphaeroides (strain ATCC 17023 / DSM 158 / JCM 6121 / CCUG 31486 / LMG 2827 / NBRC 12203 / NCIMB 8253 / ATH 2.4.1.) (Rhodobacter sphaeroides).